The sequence spans 335 residues: Photosystem II assembly lipoprotein Ycf48 (335 aa).

A signal peptide spans 1-23 (MSRLFSNLFNLLLIAAIGFGLSG). Residue C24 is the site of N-palmitoyl cysteine attachment. The S-diacylglycerol cysteine moiety is linked to residue C24.

It belongs to the Ycf48 family. As to quaternary structure, part of early PSII assembly complexes which includes D1 (psbA) and PsbI; not found in mature PSII. Binds to the lumenal side of PSII complexes. Interacts with YidC.

It is found in the cellular thylakoid membrane. A factor required for optimal assembly of photosystem II (PSII), acting in the early stages of PSII assembly. Also plays a role in replacement of photodamaged D1 (psbA). Assists YidC in synthesis of chlorophyll-binding proteins. This Prochlorococcus marinus (strain MIT 9313) protein is Photosystem II assembly lipoprotein Ycf48.